Reading from the N-terminus, the 711-residue chain is Taperin (711 aa).

Disordered stretches follow at residues 134-305 (SRLL…APKP), 328-384 (RNSF…LGKS), and 414-438 (QRPSSPPPFLPAASEEAEPAEGLRV). A compositionally biased stretch (pro residues) spans 157-180 (PPPPPPPPAPPRPPPAAPSPPAAP). The span at 197 to 206 (LQKTGSNSFT) shows a compositional bias: polar residues. Serine 241 carries the phosphoserine modification. Residues 267–282 (TPSATPASPPASATPS) are compositionally biased toward low complexity. The span at 283–296 (QRQCVSAATSTNDS) shows a compositional bias: polar residues. A phosphoserine mark is found at serine 362, serine 418, and serine 463. Disordered regions lie at residues 500–535 (TFTVVPKRKPGTLQDQHFSQANREPRPREAEEEEAS), 572–630 (SRKK…EKPF), 642–662 (SVRPESSRLPEGSSGLSSYTP), and 674–711 (QALEQAPREAEPPPVEAMLTPASQNDLSDFRSEPALYF). Polar residues-rich tracts occupy residues 512-521 (LQDQHFSQAN) and 581-590 (NDKSLQTTFE). Positions 597-624 (LEQEEEVDQQEEEEEEEEEEEEEEEGSG) are enriched in acidic residues.

This sequence belongs to the taperin family. Interacts with GRXCR2; the interaction restricts TPRN to the stereocilum basal region. Interacts with actin ACTB; the interaction may stabilize stereocilia. Interacts with CLIC5. Interacts with PTPRQ. TPRN, CLIC5 and PTPQR form concentric rings at the base of stereocilia and may form a complex. Interacts with phosphatase PPP1CA; the interaction results in inhibition of PPC1A phosphatase activity. Interacts with DNA damage response proteins XRCC6/KU70, XRCC5/KU80, PARP1, TOP1 and TOP2A; these interactions recruit TPRN to sites of DNA damage where it may play a role in DNA repair. In terms of tissue distribution, expression is detected in fetal cochlea.

It localises to the cell projection. It is found in the stereocilium. The protein localises to the microvillus. The protein resides in the nucleus. Its subcellular location is the nucleoplasm. It localises to the cytoplasm. Functionally, essential for hearing. Required for maintenance of stereocilia on both inner and outer hair cells. Necessary for the integrity of the stereociliary rootlet. May act as an actin cytoskeleton regulator involved in the regulation of actin dynamics at the pointed end in hair cells. Forms rings at the base of stereocilia and binds actin filaments in the stereocilia which may stabilize the stereocilia. Acts as a strong inhibitor of PPP1CA phosphatase activity. Recruited to sites of DNA damage and may play a role in DNA damage repair. The protein is Taperin (TPRN) of Homo sapiens (Human).